We begin with the raw amino-acid sequence, 130 residues long: Small ribosomal subunit protein bS16 (130 aa).

A compositionally biased stretch (basic and acidic residues) spans 98–109 (AAAKQAAKDAAE). The interval 98–130 (AAAKQAAKDAAEAKAAAAAEAEAPAADAEASEG) is disordered. Over residues 110 to 130 (AKAAAAAEAEAPAADAEASEG) the composition is skewed to low complexity.

The protein belongs to the bacterial ribosomal protein bS16 family.

This chain is Small ribosomal subunit protein bS16, found in Synechococcus sp. (strain CC9902).